The chain runs to 353 residues: tRNA-specific 2-thiouridylase MnmA 2 (353 aa).

ATP is bound by residues 9-16 and M35; that span reads AMSGGVDS. C98 acts as the Nucleophile in catalysis. A disulfide bridge links C98 with C194. G122 contributes to the ATP binding site. The interaction with tRNA stretch occupies residues 144–146; the sequence is KDQ. C194 serves as the catalytic Cysteine persulfide intermediate. The interaction with tRNA stretch occupies residues 300 to 301; the sequence is RY.

It belongs to the MnmA/TRMU family.

It is found in the cytoplasm. The catalysed reaction is S-sulfanyl-L-cysteinyl-[protein] + uridine(34) in tRNA + AH2 + ATP = 2-thiouridine(34) in tRNA + L-cysteinyl-[protein] + A + AMP + diphosphate + H(+). Catalyzes the 2-thiolation of uridine at the wobble position (U34) of tRNA, leading to the formation of s(2)U34. In Clostridium botulinum (strain Langeland / NCTC 10281 / Type F), this protein is tRNA-specific 2-thiouridylase MnmA 2.